We begin with the raw amino-acid sequence, 700 residues long: Pentatricopeptide repeat-containing protein 1, mitochondrial (700 aa).

Residues 49 to 93 (SSSQLPLGQERQENTGSLGSDPSHSNSTATQEEDEEEEESFGTLS) form a disordered region. The span at 62-78 (NTGSLGSDPSHSNSTAT) shows a compositional bias: polar residues. Residues 79 to 88 (QEEDEEEEES) are compositionally biased toward acidic residues. 6 PPR repeats span residues 135-171 (TPYW…RLQP), 172-206 (MESN…DLEP), 207-245 (SDAT…NFEL), 246-280 (NLKT…GHVV), 281-317 (TEET…GLQP), and 318-354 (SRDS…ATVL). The tract at residues 393–414 (SQALGPPEPPEARVPGKAQPEV) is disordered. PPR repeat units lie at residues 519 to 553 (DLTF…GLVP), 554 to 585 (NLQT…QVTP), and 586 to 620 (NTHI…RVPV). Residues 672–700 (HPWQKFRTKPQGDQDTGKEADDGCALGGR) are disordered. Positions 681 to 692 (PQGDQDTGKEAD) are enriched in basic and acidic residues.

This sequence belongs to the PTCD1 family. As to quaternary structure, associates with mitochondrial leucine tRNAs. Interacts with ELAC2. As to expression, abundant in testes, skeletal muscle and heart.

It is found in the mitochondrion. It localises to the mitochondrion matrix. Its function is as follows. Mitochondrial protein implicated in negative regulation of leucine tRNA levels, as well as negative regulation of mitochondria-encoded proteins and COX activity. Also affects the 3'-processing of mitochondrial tRNAs. This is Pentatricopeptide repeat-containing protein 1, mitochondrial (PTCD1) from Homo sapiens (Human).